Here is a 129-residue protein sequence, read N- to C-terminus: Ferredoxin-1 (129 aa).

The 2Fe-2S ferredoxin-type domain occupies 29–120 (SDMDLDDEDY…EVKIVYNAKH (92 aa)). Residues cysteine 64, cysteine 69, cysteine 72, and cysteine 103 each coordinate [2Fe-2S] cluster.

It belongs to the 2Fe2S plant-type ferredoxin family. The cofactor is [2Fe-2S] cluster.

Its function is as follows. Ferredoxins are iron-sulfur proteins that transfer electrons in a wide variety of metabolic reactions. The protein is Ferredoxin-1 (fer1) of Haloarcula marismortui (strain ATCC 43049 / DSM 3752 / JCM 8966 / VKM B-1809) (Halobacterium marismortui).